A 206-amino-acid chain; its full sequence is Ion-translocating oxidoreductase complex subunit G (206 aa).

Residues 9 to 29 (GITLALFAAGSTGLTAVINQM) form a helical membrane-spanning segment. T174 bears the FMN phosphoryl threonine mark.

This sequence belongs to the RnfG family. As to quaternary structure, the complex is composed of six subunits: RsxA, RsxB, RsxC, RsxD, RsxE and RsxG. It depends on FMN as a cofactor.

It localises to the cell inner membrane. Part of a membrane-bound complex that couples electron transfer with translocation of ions across the membrane. Required to maintain the reduced state of SoxR. The protein is Ion-translocating oxidoreductase complex subunit G of Salmonella typhi.